A 1678-amino-acid chain; its full sequence is Hispidin synthase (1678 aa).

The adenylation (A) domain stretch occupies residues 33–453 (GEHRWSYREL…WLGRNTDFIQ (421 aa)). The Carrier 1 domain maps to 586–661 (DELSNTVKHI…SLSNAVYAKL (76 aa)). S620 carries the post-translational modification O-(pantetheine 4'-phosphoryl)serine. One can recognise a Ketosynthase family 3 (KS3) domain in the interval 683-1108 (GKEIVVVGQA…GTLGGIVLEA (426 aa)). Residues C852, H988, and H1029 each act as for beta-ketoacyl synthase activity in the active site. The interval 1201 to 1499 (YKRGALAFAF…VAWSLLLSNG (299 aa)) is malonyl-CoA:ACP transacylase (MAT) domain. The tract at residues 1562–1582 (EETLSSGSSTPTLENTDLDSG) is disordered. Over residues 1564–1576 (TLSSGSSTPTLEN) the composition is skewed to polar residues. The Carrier 2 domain occupies 1597–1672 (DDLRDSIVSS…EMVSNLVEQA (76 aa)). Position 1632 is an O-(pantetheine 4'-phosphoryl)serine (S1632).

It in the N-terminal section; belongs to the NRP synthetase family.

It carries out the reaction (E)-caffeate + 2 malonyl-CoA + ATP + H(+) = hispidin + AMP + 2 CO2 + diphosphate + 2 CoA. The protein operates within secondary metabolite biosynthesis. Functionally, PKS-NRPS hybrid synthetase; part of the gene cluster that mediates the fungal bioluminescence cycle. Performs the biosynthesis of hispidin from caffeic acid by two cycles of addition of malonyl units followed by lactonization. The fungal bioluminescence cycle begins with the hispidin synthetase that catalyzes the formation of hispidin which is further hydroxylated by the hispidin-3-hydroxylase, yielding the fungal luciferin 3-hydroxyhispidin. The luciferase then produces an endoperoxide as a high-energy intermediate with decomposition that yields oxyluciferin (also known as caffeoylpyruvate) and light emission. Oxyluciferin can be recycled to caffeic acid by caffeoylpyruvate hydrolase. This Neonothopanus nambi (Agaricus nambi) protein is Hispidin synthase.